Here is a 377-residue protein sequence, read N- to C-terminus: MERQNTAERRQGAREEGRPVAVRLQNVTKRFGDFTAVEDLSLDIHEGEFFSLLGPSGCGKTTTLRMIAGFEEPTEGEVVVAGRSMRGVPPYRRPVNTVFQSYALFPHLDVFENVAFGLRRAGVPKGEISRRVGEACALVKLSGFERRKPSRLSGGQQQRVALARALVNRPKVLLLDEPLGALDLKLRKQMQLELKNLQHEVGITFIYVTHDQEEALTMSDRIAVMNEGRVQQVADPATLYELPANRFVADFIGQTNILEGTVEAVEGERAVIRTAGGLRLEAVAPNGFRPAVGEAVEAAVRPEKLRVGEAGDNVVAAEVAEVVYLGSSTQYILRAPDGGRLVAHRQNDREAAALRPGEAVSVAWDARHCLILGGKRG.

An ABC transporter domain is found at 22–252 (VRLQNVTKRF…PANRFVADFI (231 aa)). Position 54-61 (54-61 (GPSGCGKT)) interacts with ATP.

It belongs to the ABC transporter superfamily. Spermidine/putrescine importer (TC 3.A.1.11.1) family. The complex is composed of two ATP-binding proteins (PotA), two transmembrane proteins (PotB and PotC) and a solute-binding protein (PotD).

It is found in the cell membrane. It carries out the reaction ATP + H2O + polyamine-[polyamine-binding protein]Side 1 = ADP + phosphate + polyamineSide 2 + [polyamine-binding protein]Side 1.. Its function is as follows. Part of the ABC transporter complex PotABCD involved in spermidine/putrescine import. Responsible for energy coupling to the transport system. This chain is Spermidine/putrescine import ATP-binding protein PotA, found in Rubrobacter xylanophilus (strain DSM 9941 / JCM 11954 / NBRC 16129 / PRD-1).